Reading from the N-terminus, the 381-residue chain is Dual-specificity RNA methyltransferase RlmN (381 aa).

Glu-95 (proton acceptor) is an active-site residue. In terms of domain architecture, Radical SAM core spans 101-347 (EDDRGTLCVS…TTVRKTRGDD (247 aa)). Cys-108 and Cys-352 are disulfide-bonded. Positions 115, 119, and 122 each coordinate [4Fe-4S] cluster. Residues 178 to 179 (GE), Ser-210, 232 to 234 (SLH), and Asn-309 contribute to the S-adenosyl-L-methionine site. The active-site S-methylcysteine intermediate is the Cys-352.

The protein belongs to the radical SAM superfamily. RlmN family. The cofactor is [4Fe-4S] cluster.

The protein resides in the cytoplasm. The enzyme catalyses adenosine(2503) in 23S rRNA + 2 reduced [2Fe-2S]-[ferredoxin] + 2 S-adenosyl-L-methionine = 2-methyladenosine(2503) in 23S rRNA + 5'-deoxyadenosine + L-methionine + 2 oxidized [2Fe-2S]-[ferredoxin] + S-adenosyl-L-homocysteine. It carries out the reaction adenosine(37) in tRNA + 2 reduced [2Fe-2S]-[ferredoxin] + 2 S-adenosyl-L-methionine = 2-methyladenosine(37) in tRNA + 5'-deoxyadenosine + L-methionine + 2 oxidized [2Fe-2S]-[ferredoxin] + S-adenosyl-L-homocysteine. In terms of biological role, specifically methylates position 2 of adenine 2503 in 23S rRNA and position 2 of adenine 37 in tRNAs. m2A2503 modification seems to play a crucial role in the proofreading step occurring at the peptidyl transferase center and thus would serve to optimize ribosomal fidelity. The protein is Dual-specificity RNA methyltransferase RlmN of Bordetella petrii (strain ATCC BAA-461 / DSM 12804 / CCUG 43448).